Reading from the N-terminus, the 498-residue chain is Hexokinase-1 (498 aa).

One can recognise a Hexokinase domain in the interval 39–492 (AAAQRVVAEL…SGLGAALVAA (454 aa)). Residues 95–233 (TGGEEGSYYA…GLDMRVSALI (139 aa)) are hexokinase small subdomain. The ADP site is built by Gly109, Thr110, and Asn111. D-glucose-binding residues include Thr199, Lys200, Asn234, and Asp235. A hexokinase large subdomain region spans residues 234 to 481 (NDTVGTLAAG…ERVVVKLASD (248 aa)). Position 258 (Thr258) interacts with ADP. Asn261, Glu290, and Glu321 together coordinate D-glucose. Gly446 lines the ADP pocket.

The protein belongs to the hexokinase family. As to expression, highly expressed in senescent leaves.

It carries out the reaction a D-hexose + ATP = a D-hexose 6-phosphate + ADP + H(+). The catalysed reaction is D-fructose + ATP = D-fructose 6-phosphate + ADP + H(+). The enzyme catalyses D-glucose + ATP = D-glucose 6-phosphate + ADP + H(+). It functions in the pathway carbohydrate metabolism; hexose metabolism. The protein operates within carbohydrate degradation; glycolysis; D-glyceraldehyde 3-phosphate and glycerone phosphate from D-glucose: step 1/4. In terms of biological role, fructose and glucose phosphorylating enzyme. Acts as a positive regulator of leaf senescence by mediating glucose accumulation and inducing an increase in reactive oxygen species (ROS). The chain is Hexokinase-1 (HXK1) from Oryza sativa subsp. japonica (Rice).